Consider the following 107-residue polypeptide: Iron-sulfur cluster assembly protein CyaY (107 aa).

It belongs to the frataxin family.

Its function is as follows. Involved in iron-sulfur (Fe-S) cluster assembly. May act as a regulator of Fe-S biogenesis. In Enterobacter sp. (strain 638), this protein is Iron-sulfur cluster assembly protein CyaY.